We begin with the raw amino-acid sequence, 255 residues long: Ly6/PLAUR domain-containing protein 8 (255 aa).

Residues 1–20 (MRGVFIAGVIAAFAITVVDS) form the signal peptide. N-linked (GlcNAc...) asparagine glycosylation is found at asparagine 22, asparagine 30, asparagine 53, asparagine 72, asparagine 76, asparagine 105, asparagine 115, asparagine 128, asparagine 154, asparagine 169, asparagine 179, asparagine 200, and asparagine 210. The 50-residue stretch at 121–170 (CMSCYGHNKTLCEEKPQKCYEGEQCVFIIAEMVNGSGRVELKGCSDISNS) folds into the UPAR/Ly6 domain. A lipid anchor (GPI-anchor amidated serine) is attached at serine 233. A propeptide spans 234-255 (MGTKASFTSSIFGSLLLLKLLF) (removed in mature form).

Belongs to the CNF-like-inhibitor family. Post-translationally, highly N-glycosylated. Not O-glycosylated. In terms of processing, GPI-anchored. The GPI-anchor is cleaved, leading to secretion into the colonic lumen. As to expression, specifically present in enterocytes located at the uppermost epithelial layer of the colon (at protein level). Exclusively expressed in the large intestine: specifically expressed on the apical surface of epithelial cells located at the uppermost layer of the colonic gland.

The protein localises to the cell membrane. The protein resides in the secreted. In terms of biological role, secreted protein specifically required to prevent invasion of Gram-negative bacteria in the inner mucus layer of the colon epithelium, a portion of the large intestine which is free of commensal microbiota. Prevents invasion of flagellated microbiota by binding to the flagellum of bacteria, such as P.mirabilis, thereby inhibiting bacterial motility in the intestinal lumen. Segregation of intestinal bacteria and epithelial cells in the colon is required to preserve intestinal homeostasis. The protein is Ly6/PLAUR domain-containing protein 8 of Mus musculus (Mouse).